The following is a 102-amino-acid chain: MIHKLTSEERKTRLEGLPHWTAVPGRDAIQRRLRFADFNEAFGFMTRVAIKAQEMNHHPEWFNVYNRVDVTLSTHDADGLTERDIELARFIDGAATHAQPGA.

It belongs to the pterin-4-alpha-carbinolamine dehydratase family.

It catalyses the reaction (4aS,6R)-4a-hydroxy-L-erythro-5,6,7,8-tetrahydrobiopterin = (6R)-L-erythro-6,7-dihydrobiopterin + H2O. In Burkholderia cenocepacia (strain ATCC BAA-245 / DSM 16553 / LMG 16656 / NCTC 13227 / J2315 / CF5610) (Burkholderia cepacia (strain J2315)), this protein is Putative pterin-4-alpha-carbinolamine dehydratase.